The primary structure comprises 341 residues: L-threonine 3-dehydrogenase (341 aa).

Residue cysteine 38 coordinates Zn(2+). Catalysis depends on charge relay system residues threonine 40 and histidine 43. Histidine 63, glutamate 64, cysteine 93, cysteine 96, cysteine 99, and cysteine 107 together coordinate Zn(2+). NAD(+) contacts are provided by residues isoleucine 175, aspartate 195, arginine 200, 262-264, and 286-287; these read LGI and IY.

This sequence belongs to the zinc-containing alcohol dehydrogenase family. In terms of assembly, homotetramer. Requires Zn(2+) as cofactor.

It localises to the cytoplasm. It carries out the reaction L-threonine + NAD(+) = (2S)-2-amino-3-oxobutanoate + NADH + H(+). Its pathway is amino-acid degradation; L-threonine degradation via oxydo-reductase pathway; glycine from L-threonine: step 1/2. In terms of biological role, catalyzes the NAD(+)-dependent oxidation of L-threonine to 2-amino-3-ketobutyrate. This is L-threonine 3-dehydrogenase from Klebsiella pneumoniae subsp. pneumoniae (strain ATCC 700721 / MGH 78578).